The following is a 725-amino-acid chain: Catalase-peroxidase (725 aa).

Positions 98 to 226 (WHMAGSYRTS…LAAVQMGLIY (129 aa)) form a cross-link, tryptophyl-tyrosyl-methioninium (Trp-Tyr) (with M-252). Catalysis depends on His-99, which acts as the Proton acceptor. The segment at residues 226–252 (YVNPEGVNGKSDPQATAYQMRETFARM) is a cross-link (tryptophyl-tyrosyl-methioninium (Tyr-Met) (with W-98)). His-267 is a binding site for heme b.

This sequence belongs to the peroxidase family. Peroxidase/catalase subfamily. In terms of assembly, homodimer or homotetramer. The cofactor is heme b. Post-translationally, formation of the three residue Trp-Tyr-Met cross-link is important for the catalase, but not the peroxidase activity of the enzyme.

It carries out the reaction H2O2 + AH2 = A + 2 H2O. The catalysed reaction is 2 H2O2 = O2 + 2 H2O. Bifunctional enzyme with both catalase and broad-spectrum peroxidase activity. The chain is Catalase-peroxidase from Paracoccus denitrificans (strain Pd 1222).